The primary structure comprises 962 residues: Protease 3 (962 aa).

The N-terminal stretch at 1 to 23 (MPRSTWFKALLLLVALWGPAVQA) is a signal peptide. His88 is a Zn(2+) binding site. Catalysis depends on Glu91, which acts as the Proton acceptor. The Zn(2+) site is built by His92 and Glu169.

It belongs to the peptidase M16 family. Monomer. Zn(2+) serves as cofactor.

The protein resides in the periplasm. It catalyses the reaction Preferential cleavage of 16-Tyr-|-Leu-17 and 25-Phe-|-Tyr-26 bonds of oxidized insulin B chain. Also acts on other substrates of Mw less than 7 kDa such as insulin and glucagon.. Functionally, endopeptidase that degrades small peptides of less than 7 kDa, such as glucagon and insulin. The protein is Protease 3 (ptrA) of Salmonella typhi.